The sequence spans 2336 residues: Voltage-dependent N-type calcium channel subunit alpha-1B (2336 aa).

The disordered stretch occupies residues 1–37; it reads MVRFGDELGGRYGGTGGGERARGGGAGGAGGPGQGGL. Over 1-90 the chain is Cytoplasmic; sequence MVRFGDELGG…DNVVRKYAKR (90 aa). A compositionally biased stretch (gly residues) spans 10–37; sequence GRYGGTGGGERARGGGAGGAGGPGQGGL. Arginine 22 carries the omega-N-methylarginine modification. The stretch at 82–359 is one I repeat; the sequence is NVVRKYAKRI…LVLGVLSGEF (278 aa). The chain crosses the membrane as a helical span at residues 91–114; the sequence is ITEWPPFEYMILATIIANCIVLAL. The Extracellular portion of the chain corresponds to 115–131; sequence EQHLPDGDKTPMSERLD. A helical membrane pass occupies residues 132–152; sequence DTEPYFIGIFCFEAGIKIIAL. The Cytoplasmic portion of the chain corresponds to 153 to 163; it reads GFVFHKGSYLR. The chain crosses the membrane as a helical span at residues 164-182; sequence NGWNVMDFVVVLTEILATA. At 183 to 187 the chain is on the extracellular side; that stretch reads GTDFD. The chain crosses the membrane as a helical span at residues 188-211; that stretch reads LRTLRAVRVLRPLKLVSGIPSLQV. At 212 to 221 the chain is on the cytoplasmic side; that stretch reads VLKSIMKAMV. Residues 222-244 traverse the membrane as a helical segment; sequence PLLQIGLLLFFAILMFAIIGLEF. Over 245 to 331 the chain is Extracellular; sequence YMGKFHKACF…NTNDAAGNTW (87 aa). Asparagine 256 carries N-linked (GlcNAc...) asparagine glycosylation. The helical transmembrane segment at 332 to 356 threads the bilayer; sequence NWLYFIPLIIIGSFFMLNLVLGVLS. The Cytoplasmic segment spans residues 357 to 483; it reads GEFAKERERV…FLIRRMVKAQ (127 aa). A binding to the beta subunit region spans residues 379–396; it reads QQIERELNGYLEWIFKAE. Position 411 is a phosphoserine (serine 411). 452-459 contributes to the ATP binding site; it reads ASLKSGKT. An II repeat occupies 469 to 713; that stretch reads EKMFRFLIRR…VFLAIAVDNL (245 aa). A helical transmembrane segment spans residues 484–502; the sequence is SFYWVVLCVVALNTLCVAM. The Extracellular portion of the chain corresponds to 503 to 512; sequence VHYNQPQRLT. Residues 513–535 form a helical membrane-spanning segment; the sequence is TALYFAEFVFLGLFLTEMSLKMY. Residues 536–545 are Cytoplasmic-facing; sequence GLGPRSYFRS. Residue serine 545 coordinates a 1,2-diacyl-sn-glycero-3-phospho-(1D-myo-inositol-4,5-bisphosphate). A helical membrane pass occupies residues 546 to 567; it reads SFNCFDFGVIVGSIFEVVWAAI. The Extracellular portion of the chain corresponds to 568–574; it reads KPGTSFG. Residues 575–587 traverse the membrane as a helical segment; the sequence is ISVLRALRLLRIF. A 1,2-diacyl-sn-glycero-3-phospho-(1D-myo-inositol-4,5-bisphosphate)-binding residues include arginine 585 and lysine 588. Topologically, residues 588 to 605 are cytoplasmic; sequence KVTKYWNSLRNLVVSLLN. The chain crosses the membrane as a helical span at residues 606 to 631; it reads SMKSIISLLFLLFLFIVVFALLGMQL. At 632–683 the chain is on the extracellular side; that stretch reads FGGQFNFQDETPTTNFDTFPAAILTVFQILTGEDWNAVMYHGIESQGGVSKG. A helical membrane pass occupies residues 684 to 710; it reads MFSSFYFIVLTLFGNYTLLNVFLAIAV. The Cytoplasmic portion of the chain corresponds to 711–1149; it reads DNLANAQELT…FCHYIVTMRY (439 aa). Residues serine 746, serine 749, and serine 784 each carry the phosphoserine modification. Disordered stretches follow at residues 800 to 1021 and 1051 to 1076; these read YAST…HQPK and EQPE…STTV. 6 stretches are compositionally biased toward basic and acidic residues: residues 806 to 827, 870 to 891, 920 to 930, 938 to 948, 970 to 981, and 996 to 1021; these read VRPD…RDGL, EQDR…EERA, GSPEEATEREP, HAQDSSKEGKE, GPRETENSEEPT, and PPER…HQPK. Residues 1059 to 1076 show a composition bias toward polar residues; the sequence is QRNVTRMGSQPSDPSTTV. Position 1067 is a phosphoserine (serine 1067). The stretch at 1135–1421 is one III repeat; sequence NLLRRFCHYI…IFVALIIITF (287 aa). A helical transmembrane segment spans residues 1150–1168; the sequence is FEMVILVVIALSSIALAAE. The Extracellular segment spans residues 1169–1176; the sequence is DPVRTDSF. The chain crosses the membrane as a helical span at residues 1177–1201; that stretch reads RNNALKYMDYIFTGVFTFEMVIKMI. Topologically, residues 1202–1215 are cytoplasmic; the sequence is DLGLLLHPGAYFRD. The chain crosses the membrane as a helical span at residues 1216–1240; it reads LWNILDFIVVSGALVAFAFSSFMGG. Over 1241–1246 the chain is Extracellular; it reads SKGKDI. Residues 1247–1267 traverse the membrane as a helical segment; that stretch reads NTIKSLRVLRVLRPLKTIKRL. The Cytoplasmic segment spans residues 1268–1285; it reads PKLKAVFDCVVNSLKNVL. Residues 1286–1305 traverse the membrane as a helical segment; that stretch reads NILIVYMLFMFIFAVIAVQL. Residues 1306 to 1392 lie on the Extracellular side of the membrane; the sequence is FKGKFFYCTD…EQGPSPGFRM (87 aa). Residues 1393–1418 form a helical membrane-spanning segment; the sequence is ELSIFYVVYFVVFPFFFVNIFVALII. Residues 1419–1473 are Cytoplasmic-facing; the sequence is ITFQEQGDKVMSECSLEKNERACIDFAISAKPLTRYMPQNKQSFQYKTWTFVVSP. One copy of the IV repeat lies at 1458-1711; that stretch reads NKQSFQYKTW…LFVAVIMDNF (254 aa). Residues 1474–1492 form a helical membrane-spanning segment; sequence PFEYFIMAMIALNTVVLMM. The Extracellular segment spans residues 1493 to 1500; that stretch reads KFYDAPYE. The chain crosses the membrane as a helical span at residues 1501-1525; that stretch reads YELMLKCLNIVFTSMFSLECILKII. Residues 1526 to 1535 are Cytoplasmic-facing; that stretch reads AFGVLNYFRD. Residues 1536-1557 traverse the membrane as a helical segment; it reads AWNVFDFVTVLGSITDILVTEI. At 1558 to 1563 the chain is on the extracellular side; the sequence is ANNFIN. Asparagine 1563 carries N-linked (GlcNAc...) asparagine glycosylation. A helical membrane pass occupies residues 1564–1582; the sequence is LSFLRLFRAARLIKLCRQG. At 1583–1601 the chain is on the cytoplasmic side; that stretch reads YTIRILLWTFVQSFKALPY. The chain crosses the membrane as a helical span at residues 1602–1621; the sequence is VCLLIAMLFFIYAIIGMQVF. The Extracellular portion of the chain corresponds to 1622–1683; it reads GNIALDDGTS…ANASECGSDF (62 aa). An N-linked (GlcNAc...) asparagine glycan is attached at asparagine 1675. Residues 1684–1707 form a helical membrane-spanning segment; it reads AYFYFVSFIFLCSFLMLNLFVAVI. Over 1708-2336 the chain is Cytoplasmic; sequence MDNFEYLTRD…YHHPDQDHWC (629 aa). The EF-hand domain maps to 1724–1759; the sequence is HHLDEFIRVWAEYDPAACGRISYNDMFEMLKHMSPP. Ca(2+) is bound by residues aspartate 1737, arginine 1743, and aspartate 1748. A disordered region spans residues 1981-2202; sequence TLRGPDGEPQ…TPRPSITYKT (222 aa). The span at 2048–2062 shows a compositional bias: basic residues; it reads SHHHHHRCHRRRDKK. Serine 2065 carries the phosphoserine modification. A compositionally biased stretch (basic and acidic residues) spans 2097–2113; that stretch reads CRRERKQERGRSQERRQ. Residues 2161–2177 show a composition bias toward polar residues; that stretch reads GSGSVNGSPLMSTSGAS. Phosphoserine is present on residues serine 2221, serine 2230, and serine 2253.

Belongs to the calcium channel alpha-1 subunit (TC 1.A.1.11) family. CACNA1B subfamily. In terms of assembly, multisubunit complex consisting of alpha-1, alpha-2, beta and delta subunits in a 1:1:1:1 ratio. The channel activity is directed by the pore-forming and voltage-sensitive alpha-1 subunit. In many cases, this subunit is sufficient to generate voltage-sensitive calcium channel activity. The auxiliary subunits beta and alpha-2/delta linked by a disulfide bridge regulate the channel activity. Interacts with RIMS1. Interacts with FMR1 (via C-terminus); this interaction induces a decrease in the number of presynaptic functional CACNA1B channels at the cell surface. Phosphorylated in vitro by CaM-kinase II, PKA, PKC and CGPK. As to expression, central nervous system.

Its subcellular location is the membrane. The catalysed reaction is Ca(2+)(in) = Ca(2+)(out). Its activity is regulated as follows. Is specifically blocked by omega-conotoxin GVIA. Is specifically blocked by omega-conotoxin MVIIA (ziconotide). Is insensitive to dihydropyridines (DHP). Functionally, voltage-sensitive calcium channels (VSCC) mediate the entry of calcium ions into excitable cells and are also involved in a variety of calcium-dependent processes, including muscle contraction, hormone or neurotransmitter release, gene expression, cell motility, cell division and cell death. This alpha-1B subunit gives rise to N-type calcium currents. N-type calcium channels belong to the 'high-voltage activated' (HVA) group. They are involved in pain signaling. Calcium channels containing alpha-1B subunit may play a role in directed migration of immature neurons. Mediates Ca(2+) release probability at hippocampal neuronal soma and synaptic terminals. This chain is Voltage-dependent N-type calcium channel subunit alpha-1B (Cacna1b), found in Rattus norvegicus (Rat).